We begin with the raw amino-acid sequence, 135 residues long: ATP synthase epsilon chain (135 aa).

This sequence belongs to the ATPase epsilon chain family. As to quaternary structure, F-type ATPases have 2 components, CF(1) - the catalytic core - and CF(0) - the membrane proton channel. CF(1) has five subunits: alpha(3), beta(3), gamma(1), delta(1), epsilon(1). CF(0) has three main subunits: a, b and c.

It is found in the cell inner membrane. In terms of biological role, produces ATP from ADP in the presence of a proton gradient across the membrane. This chain is ATP synthase epsilon chain, found in Brucella suis (strain ATCC 23445 / NCTC 10510).